A 314-amino-acid chain; its full sequence is Nitrilase 2 (314 aa).

The region spanning 7–269 (VTLGVAQAAP…ETLITARVST (263 aa)) is the CN hydrolase domain. The active-site Proton acceptor is Glu47. The Proton donor role is filled by Lys132. The Nucleophile role is filled by Cys166.

The protein belongs to the carbon-nitrogen hydrolase superfamily. Nitrilase family.

The enzyme catalyses a nitrile + 2 H2O = a carboxylate + NH4(+). Its function is as follows. Nitrilases catalyze the mild hydrolytic conversion of organonitriles directly to the corresponding carboxylic acids. Catalyzes the production of aryllactic acid derivatives. Mediates the hydrolysis of cyanohydrin to (S)-phenyllactic acid. This chain is Nitrilase 2, found in Unknown prokaryotic organism.